Consider the following 480-residue polypeptide: Glycogen synthase (480 aa).

K15 provides a ligand contact to ADP-alpha-D-glucose.

This sequence belongs to the glycosyltransferase 1 family. Bacterial/plant glycogen synthase subfamily.

It carries out the reaction [(1-&gt;4)-alpha-D-glucosyl](n) + ADP-alpha-D-glucose = [(1-&gt;4)-alpha-D-glucosyl](n+1) + ADP + H(+). It functions in the pathway glycan biosynthesis; glycogen biosynthesis. Functionally, synthesizes alpha-1,4-glucan chains using ADP-glucose. The polypeptide is Glycogen synthase (Desulforamulus reducens (strain ATCC BAA-1160 / DSM 100696 / MI-1) (Desulfotomaculum reducens)).